The following is a 493-amino-acid chain: UDP-N-acetylmuramoylalanine--D-glutamate ligase (493 aa).

126–132 (GTNGKTT) contributes to the ATP binding site.

The protein belongs to the MurCDEF family.

Its subcellular location is the cytoplasm. The catalysed reaction is UDP-N-acetyl-alpha-D-muramoyl-L-alanine + D-glutamate + ATP = UDP-N-acetyl-alpha-D-muramoyl-L-alanyl-D-glutamate + ADP + phosphate + H(+). The protein operates within cell wall biogenesis; peptidoglycan biosynthesis. Cell wall formation. Catalyzes the addition of glutamate to the nucleotide precursor UDP-N-acetylmuramoyl-L-alanine (UMA). The chain is UDP-N-acetylmuramoylalanine--D-glutamate ligase from Mycolicibacterium smegmatis (strain ATCC 700084 / mc(2)155) (Mycobacterium smegmatis).